The chain runs to 658 residues: Heat shock 70 kDa protein, mitochondrial (658 aa).

The tract at residues 629–658 (KLDSSASKSSSTENKENKDNTTEAEFTEKK) is disordered. Over residues 631–640 (DSSASKSSST) the composition is skewed to low complexity. The segment covering 641-658 (ENKENKDNTTEAEFTEKK) has biased composition (basic and acidic residues).

It belongs to the heat shock protein 70 family.

It localises to the mitochondrion. In terms of biological role, may function in protein folding and assembly, and disassembly of protein complexes. In Dictyostelium discoideum (Social amoeba), this protein is Heat shock 70 kDa protein, mitochondrial (mhsp70).